We begin with the raw amino-acid sequence, 511 residues long: Phosphoenolpyruvate carboxylase (511 aa).

Belongs to the PEPCase type 2 family. In terms of assembly, homotetramer. Mg(2+) serves as cofactor.

It carries out the reaction oxaloacetate + phosphate = phosphoenolpyruvate + hydrogencarbonate. Catalyzes the irreversible beta-carboxylation of phosphoenolpyruvate (PEP) to form oxaloacetate (OAA), a four-carbon dicarboxylic acid source for the tricarboxylic acid cycle. The polypeptide is Phosphoenolpyruvate carboxylase (Saccharolobus islandicus (strain L.S.2.15 / Lassen #1) (Sulfolobus islandicus)).